Here is a 377-residue protein sequence, read N- to C-terminus: Ribosomal RNA large subunit methyltransferase G (377 aa).

Belongs to the methyltransferase superfamily. RlmG family.

The protein resides in the cytoplasm. It catalyses the reaction guanosine(1835) in 23S rRNA + S-adenosyl-L-methionine = N(2)-methylguanosine(1835) in 23S rRNA + S-adenosyl-L-homocysteine + H(+). Its function is as follows. Specifically methylates the guanine in position 1835 (m2G1835) of 23S rRNA. This is Ribosomal RNA large subunit methyltransferase G from Shewanella sp. (strain ANA-3).